Reading from the N-terminus, the 429-residue chain is Endoglucanase type C (429 aa).

The first 18 residues, 1-18 (MKSLSLILSALAVQVAVA), serve as a signal peptide directing secretion. Gln-19 carries the post-translational modification Pyrrolidone carboxylic acid. 9 disulfide bridges follow: Cys-36/Cys-42, Cys-66/Cys-88, Cys-78/Cys-84, Cys-156/Cys-383, Cys-190/Cys-213, Cys-194/Cys-212, Cys-233/Cys-252, Cys-241/Cys-246, and Cys-257/Cys-333. The N-linked (GlcNAc...) asparagine glycan is linked to Asn-74. Glu-215 serves as the catalytic Nucleophile. Glu-220 functions as the Proton donor in the catalytic mechanism. N-linked (GlcNAc...) asparagine glycans are attached at residues Asn-265 and Asn-318.

Belongs to the glycosyl hydrolase 7 (cellulase C) family.

The enzyme catalyses Endohydrolysis of (1-&gt;4)-beta-D-glucosidic linkages in cellulose, lichenin and cereal beta-D-glucans.. This is Endoglucanase type C from Fusarium oxysporum (Fusarium vascular wilt).